Reading from the N-terminus, the 727-residue chain is AN1-type zinc finger protein 4 (727 aa).

In terms of domain architecture, Ubiquitin-like spans 28–103 (MELFIETLTG…LKLVLAMRGG (76 aa)). Disordered stretches follow at residues 187–217 (HRMS…IIEN) and 238–264 (KKPK…TAPS). Positions 238–248 (KKPKKAVKIKP) are enriched in basic residues. Residues 661-708 (KKTTNHCFLCGKKTGLASSYECRCGNNFCASHRYAETHGCTYDYKSAG) form an AN1-type zinc finger. Residues Cys667, Cys670, Cys682, Cys684, Cys689, His692, His698, and Cys700 each contribute to the Zn(2+) site.

This chain is AN1-type zinc finger protein 4 (ZFAND4), found in Homo sapiens (Human).